A 139-amino-acid polypeptide reads, in one-letter code: Protein archease (139 aa).

Residues D12, D138, and I139 each coordinate Ca(2+).

This sequence belongs to the archease family.

Functionally, activates the tRNA-splicing ligase complex by facilitating the enzymatic turnover of catalytic subunit RtcB. Acts by promoting the guanylylation of RtcB, a key intermediate step in tRNA ligation. Can also alter the NTP specificity of RtcB such that ATP, dGTP or ITP is used efficiently. This is Protein archease from Sulfurisphaera tokodaii (strain DSM 16993 / JCM 10545 / NBRC 100140 / 7) (Sulfolobus tokodaii).